The primary structure comprises 302 residues: Aquaporin NIP3-1 (302 aa).

The interval Met-1–Asp-31 is disordered. Positions Pro-7 to Pro-21 are enriched in low complexity. The next 2 helical transmembrane spans lie at Leu-76–Val-96 and Gly-102–Leu-122. An NPA 1 motif is present at residues Asn-133–Ser-135. A run of 3 helical transmembrane segments spans residues Leu-149–Leu-169, Ala-193–Thr-213, and Ala-217–Ala-237. The short motif at Asn-246 to Val-248 is the NPA 2 element. Residues Trp-264 to Val-284 traverse the membrane as a helical segment.

Belongs to the MIP/aquaporin (TC 1.A.8) family. NIP (TC 1.A.8.12) subfamily.

It is found in the membrane. Functionally, aquaporins facilitate the transport of water and small neutral solutes across cell membranes. This chain is Aquaporin NIP3-1 (NIP3-1), found in Zea mays (Maize).